The sequence spans 444 residues: 23S rRNA (uracil(1939)-C(5))-methyltransferase RlmD (444 aa).

In terms of domain architecture, TRAM spans 5–67; it reads RSRIDRTPFQ…RHFDEARTVE (63 aa). [4Fe-4S] cluster is bound by residues C80, C86, C89, and C168. Residues Q276, F305, N310, E326, D353, and D374 each coordinate S-adenosyl-L-methionine. The active-site Nucleophile is C400.

The protein belongs to the class I-like SAM-binding methyltransferase superfamily. RNA M5U methyltransferase family. RlmD subfamily.

It catalyses the reaction uridine(1939) in 23S rRNA + S-adenosyl-L-methionine = 5-methyluridine(1939) in 23S rRNA + S-adenosyl-L-homocysteine + H(+). In terms of biological role, catalyzes the formation of 5-methyl-uridine at position 1939 (m5U1939) in 23S rRNA. The chain is 23S rRNA (uracil(1939)-C(5))-methyltransferase RlmD from Stenotrophomonas maltophilia (strain R551-3).